Consider the following 406-residue polypeptide: COP9 signalosome complex subunit 4 (406 aa).

An N-acetylalanine modification is found at A2. K25 carries the post-translational modification N6-acetyllysine. In terms of domain architecture, PCI spans 197–366; it reads YRRKFIEAAQ…GIVHFETREA (170 aa).

Belongs to the CSN4 family. As to quaternary structure, component of the CSN complex, composed of COPS1/GPS1, COPS2, COPS3, COPS4, COPS5, COPS6, COPS7 (COPS7A or COPS7B), COPS8 and COPS9. In the complex, it probably interacts directly with COPS1, COPS2, COPS3, COPS5, COPS6, COPS7 (COPS7A or COPS7B) and COPS8. Interacts with TOR1A; the interaction is direct and associates TOR1A and SNAPIN with the CSN complex. Interacts with STON2; controls STON2 neddylation levels. Interacts with ERCC6.

The protein localises to the cytoplasm. It localises to the nucleus. The protein resides in the cytoplasmic vesicle. It is found in the secretory vesicle. Its subcellular location is the synaptic vesicle. Component of the COP9 signalosome complex (CSN), a complex involved in various cellular and developmental processes. The CSN complex is an essential regulator of the ubiquitin (Ubl) conjugation pathway by mediating the deneddylation of the cullin subunits of SCF-type E3 ligase complexes, leading to decrease the Ubl ligase activity of SCF-type complexes such as SCF, CSA or DDB2. Also involved in the deneddylation of non-cullin subunits such as STON2. The complex is also involved in phosphorylation of p53/TP53, c-jun/JUN, IkappaBalpha/NFKBIA, ITPK1, IRF8/ICSBP and SNAPIN, possibly via its association with CK2 and PKD kinases. CSN-dependent phosphorylation of TP53 and JUN promotes and protects degradation by the Ubl system, respectively. This Mus musculus (Mouse) protein is COP9 signalosome complex subunit 4 (Cops4).